Here is a 506-residue protein sequence, read N- to C-terminus: Galactose/methyl galactoside import ATP-binding protein MglA (506 aa).

ABC transporter domains are found at residues 14-249 (LEMS…VGRS) and 264-506 (VILE…SLHL). 46 to 53 (GENGAGKS) contributes to the ATP binding site.

This sequence belongs to the ABC transporter superfamily. Galactose/methyl galactoside importer (TC 3.A.1.2.3) family. In terms of assembly, the complex is composed of one ATP-binding protein (MglA), two transmembrane proteins (MglC) and a solute-binding protein (MglB).

The protein localises to the cell inner membrane. It carries out the reaction D-galactose(out) + ATP + H2O = D-galactose(in) + ADP + phosphate + H(+). It catalyses the reaction methyl beta-D-galactoside(out) + ATP + H2O = methyl beta-D-galactoside(in) + ADP + phosphate + H(+). In terms of biological role, part of the ABC transporter complex MglABC involved in galactose/methyl galactoside import. Responsible for energy coupling to the transport system. The polypeptide is Galactose/methyl galactoside import ATP-binding protein MglA (Shigella flexneri serotype 5b (strain 8401)).